The following is a 241-amino-acid chain: Ribonuclease 3 (241 aa).

Positions 16–144 (HAEFEKKINY…VIGAIFQDGG (129 aa)) constitute an RNase III domain. A Mg(2+)-binding site is contributed by glutamate 57. Active-site residues include aspartate 61 and glutamate 133. Mg(2+) is bound at residue glutamate 133. One can recognise a DRBM domain in the interval 171–240 (DAKSRLQEIL…AALAIKKIES (70 aa)).

The protein belongs to the ribonuclease III family. As to quaternary structure, homodimer. Mg(2+) is required as a cofactor.

It localises to the cytoplasm. It carries out the reaction Endonucleolytic cleavage to 5'-phosphomonoester.. Functionally, digests double-stranded RNA. Involved in the processing of primary rRNA transcript to yield the immediate precursors to the large and small rRNAs (23S and 16S). Processes some mRNAs, and tRNAs when they are encoded in the rRNA operon. Processes pre-crRNA and tracrRNA of type II CRISPR loci if present in the organism. The chain is Ribonuclease 3 from Desulfotalea psychrophila (strain LSv54 / DSM 12343).